The primary structure comprises 2499 residues: Probable polyketide synthase 23 (2499 aa).

One can recognise a Ketosynthase family 3 (KS3) domain in the interval Asp-11–Glu-430. Catalysis depends on for beta-ketoacyl synthase activity residues Cys-177, His-316, and His-354. Residues Gly-623 to Tyr-656 are acyl/malonyl transferases. Ser-633 acts as the For acyl/malonyl transferase activity in catalysis. Positions Ile-924–Val-1044 are N-terminal hotdog fold. A PKS/mFAS DH domain is found at Ile-924–Asp-1209. His-956 (proton acceptor; for dehydratase activity) is an active-site residue. The interval Asn-1059–Asp-1209 is C-terminal hotdog fold. The active-site Proton donor; for dehydratase activity is Asp-1121. Residues Glu-2414 to Val-2491 form the Carrier domain. Ser-2451 carries the O-(pantetheine 4'-phosphoryl)serine modification.

Requires pantetheine 4'-phosphate as cofactor.

Probable polyketide synthase. The polypeptide is Probable polyketide synthase 23 (pks23) (Dictyostelium discoideum (Social amoeba)).